The chain runs to 109 residues: Parvalbumin beta 2 (109 aa).

The residue at position 2 (alanine 2) is an N-acetylalanine. EF-hand domains follow at residues 39 to 74 (KSPA…FSAG) and 78 to 109 (LSDA…MIKA). Ca(2+)-binding residues include aspartate 52, aspartate 54, serine 56, phenylalanine 58, glutamate 60, glutamate 63, aspartate 91, aspartate 93, aspartate 95, lysine 97, and glutamate 102.

The protein belongs to the parvalbumin family. As to quaternary structure, monomer.

Functionally, in muscle, parvalbumin is thought to be involved in relaxation after contraction. It binds two calcium ions. In Gadus morhua (Atlantic cod), this protein is Parvalbumin beta 2.